Reading from the N-terminus, the 213-residue chain is ATP phosphoribosyltransferase (213 aa).

Belongs to the ATP phosphoribosyltransferase family. Short subfamily. Heteromultimer composed of HisG and HisZ subunits.

It localises to the cytoplasm. The catalysed reaction is 1-(5-phospho-beta-D-ribosyl)-ATP + diphosphate = 5-phospho-alpha-D-ribose 1-diphosphate + ATP. It participates in amino-acid biosynthesis; L-histidine biosynthesis; L-histidine from 5-phospho-alpha-D-ribose 1-diphosphate: step 1/9. Catalyzes the condensation of ATP and 5-phosphoribose 1-diphosphate to form N'-(5'-phosphoribosyl)-ATP (PR-ATP). Has a crucial role in the pathway because the rate of histidine biosynthesis seems to be controlled primarily by regulation of HisG enzymatic activity. In Saccharophagus degradans (strain 2-40 / ATCC 43961 / DSM 17024), this protein is ATP phosphoribosyltransferase.